The primary structure comprises 288 residues: 5,10-methylenetetrahydrofolate reductase (288 aa).

Positions 51, 73, 106, 107, 118, 140, 144, and 159 each coordinate FAD. Aspartate 107 provides a ligand contact to (6S)-5-methyl-5,6,7,8-tetrahydrofolate. Glutamine 175 contacts (6S)-5-methyl-5,6,7,8-tetrahydrofolate. NADH is bound at residue glutamine 175.

Belongs to the methylenetetrahydrofolate reductase family. FAD serves as cofactor.

It catalyses the reaction (6S)-5-methyl-5,6,7,8-tetrahydrofolate + NAD(+) = (6R)-5,10-methylene-5,6,7,8-tetrahydrofolate + NADH + H(+). It participates in one-carbon metabolism; tetrahydrofolate interconversion. Its pathway is amino-acid biosynthesis; L-methionine biosynthesis via de novo pathway. Catalyzes the NADH-dependent reduction of 5,10-methylenetetrahydrofolate to 5-methyltetrahydrofolate. Is required to provide the methyl group necessary for methionine synthetase to convert homocysteine to methionine; the methyl group is given by 5-methyltetrahydrofolate. Is required for Sphingobium SYK-6 to grow on vanillate or syringate as the sole source of carbon. This chain is 5,10-methylenetetrahydrofolate reductase, found in Sphingobium sp. (strain NBRC 103272 / SYK-6).